We begin with the raw amino-acid sequence, 432 residues long: 3-phosphoshikimate 1-carboxyvinyltransferase (432 aa).

Residues Lys22, Ser23, and Arg27 each coordinate 3-phosphoshikimate. Lys22 serves as a coordination point for phosphoenolpyruvate. Positions 96 and 127 each coordinate phosphoenolpyruvate. 3-phosphoshikimate-binding residues include Ser173, Ser174, Gln175, Ser201, Asp316, Asn339, and Lys343. Gln175 is a binding site for phosphoenolpyruvate. The active-site Proton acceptor is the Asp316. Phosphoenolpyruvate-binding residues include Arg347, Arg391, and Lys416.

The protein belongs to the EPSP synthase family. In terms of assembly, monomer.

Its subcellular location is the cytoplasm. The catalysed reaction is 3-phosphoshikimate + phosphoenolpyruvate = 5-O-(1-carboxyvinyl)-3-phosphoshikimate + phosphate. Its pathway is metabolic intermediate biosynthesis; chorismate biosynthesis; chorismate from D-erythrose 4-phosphate and phosphoenolpyruvate: step 6/7. In terms of biological role, catalyzes the transfer of the enolpyruvyl moiety of phosphoenolpyruvate (PEP) to the 5-hydroxyl of shikimate-3-phosphate (S3P) to produce enolpyruvyl shikimate-3-phosphate and inorganic phosphate. This chain is 3-phosphoshikimate 1-carboxyvinyltransferase, found in Actinobacillus pleuropneumoniae serotype 5b (strain L20).